Reading from the N-terminus, the 85-residue chain is Large ribosomal subunit protein bL27 (85 aa).

Residues 1–24 form a disordered region; that stretch reads MAHKKAGGSSRNGRDSNSKRLGVK.

The protein belongs to the bacterial ribosomal protein bL27 family.

In Nitrosospira multiformis (strain ATCC 25196 / NCIMB 11849 / C 71), this protein is Large ribosomal subunit protein bL27.